A 138-amino-acid chain; its full sequence is MTFMTVQVVTPDGIRYDHHANFISVKTPDGEMGILPEHINLIAPLTVHEMKIHRTDDPNHVDWVAINGGIIEIKDNLVTIVADSAERERDIDVSRAERAKIRAERKLEQAQSTHDIDEVRRAQVALRRALNRISVGNK.

This sequence belongs to the ATPase epsilon chain family. F-type ATPases have 2 components, CF(1) - the catalytic core - and CF(0) - the membrane proton channel. CF(1) has five subunits: alpha(3), beta(3), gamma(1), delta(1), epsilon(1). CF(0) has three main subunits: a, b and c.

It localises to the cell membrane. Its function is as follows. Produces ATP from ADP in the presence of a proton gradient across the membrane. This Streptococcus equinus (Streptococcus bovis) protein is ATP synthase epsilon chain.